We begin with the raw amino-acid sequence, 502 residues long: ATP synthase subunit alpha (502 aa).

Position 169–176 (169–176) interacts with ATP; that stretch reads GDRQTGKT.

Belongs to the ATPase alpha/beta chains family. F-type ATPases have 2 components, CF(1) - the catalytic core - and CF(0) - the membrane proton channel. CF(1) has five subunits: alpha(3), beta(3), gamma(1), delta(1), epsilon(1). CF(0) has three main subunits: a(1), b(2) and c(9-12). The alpha and beta chains form an alternating ring which encloses part of the gamma chain. CF(1) is attached to CF(0) by a central stalk formed by the gamma and epsilon chains, while a peripheral stalk is formed by the delta and b chains.

Its subcellular location is the cell inner membrane. It carries out the reaction ATP + H2O + 4 H(+)(in) = ADP + phosphate + 5 H(+)(out). Functionally, produces ATP from ADP in the presence of a proton gradient across the membrane. The alpha chain is a regulatory subunit. The sequence is that of ATP synthase subunit alpha from Oleidesulfovibrio alaskensis (strain ATCC BAA-1058 / DSM 17464 / G20) (Desulfovibrio alaskensis).